A 316-amino-acid chain; its full sequence is Low affinity immunoglobulin gamma Fc region receptor II-a (316 aa).

Positions 1-35 (MAMETQMSQNVCPRNLWLLQPLTVLLLLASADSQA) are cleaved as a signal peptide. The Extracellular segment spans residues 36–216 (APPKAVLKLE…PSVGSSSPVG (181 aa)). Ig-like C2-type domains follow at residues 38–117 (PKAV…VHLT) and 121–203 (EWLV…VTIT). 2 disulfides stabilise this stretch: Cys-61–Cys-103 and Cys-142–Cys-186. Asn-96, Asn-170, and Asn-177 each carry an N-linked (GlcNAc...) asparagine glycan. A helical transmembrane segment spans residues 217-239 (IIVAVVIATAVAAIVAAVVALIY). Over 240 to 316 (CRKKRISANS…PPNDHVNSNN (77 aa)) the chain is Cytoplasmic. 2 positions are modified to phosphotyrosine; by SRC-type Tyr-kinases: Tyr-287 and Tyr-303.

Interacts with INPP5D/SHIP1 and INPPL1/SHIP2, regulating its function. Interacts with APCS and FGR. Interacts with HCK. Phosphorylated by SRC-type Tyr-kinases such as HCK, LYN, BLK, FYN and SYK.

The protein resides in the cell membrane. Binds to the Fc region of immunoglobulins gamma. Low affinity receptor. By binding to IgG it initiates cellular responses against pathogens and soluble antigens. Promotes phagocytosis of opsonized antigens. This chain is Low affinity immunoglobulin gamma Fc region receptor II-a (FCGR2A), found in Pan troglodytes (Chimpanzee).